We begin with the raw amino-acid sequence, 855 residues long: Valine--tRNA ligase (855 aa).

Residues 44 to 54 (PYPTGNFHIGN) carry the 'HIGH' region motif. The 'KMSKS' region signature appears at 522–526 (KMSKS). An ATP-binding site is contributed by Lys-525.

It belongs to the class-I aminoacyl-tRNA synthetase family. ValS type 2 subfamily.

The protein localises to the cytoplasm. It catalyses the reaction tRNA(Val) + L-valine + ATP = L-valyl-tRNA(Val) + AMP + diphosphate. Catalyzes the attachment of valine to tRNA(Val). As ValRS can inadvertently accommodate and process structurally similar amino acids such as threonine, to avoid such errors, it has a 'posttransfer' editing activity that hydrolyzes mischarged Thr-tRNA(Val) in a tRNA-dependent manner. In Methanothrix thermoacetophila (strain DSM 6194 / JCM 14653 / NBRC 101360 / PT) (Methanosaeta thermophila), this protein is Valine--tRNA ligase.